Reading from the N-terminus, the 177-residue chain is Transcription termination/antitermination protein NusG (177 aa).

The region spanning 125-150 (EGENVRITEGPFANFTAIVEEYDMVR) is the KOW domain.

This sequence belongs to the NusG family.

In terms of biological role, participates in transcription elongation, termination and antitermination. The protein is Transcription termination/antitermination protein NusG of Campylobacter jejuni subsp. jejuni serotype O:2 (strain ATCC 700819 / NCTC 11168).